Consider the following 309-residue polypeptide: Olfactory receptor 2AP1 (309 aa).

Residues 1-23 lie on the Extracellular side of the membrane; it reads MKNKTVLTEFILLGLTDVPELQV. N-linked (GlcNAc...) asparagine glycosylation occurs at asparagine 3. The chain crosses the membrane as a helical span at residues 24–47; that stretch reads AVFTFLFLAYLLSILGNLTILILT. Residues 48–55 lie on the Cytoplasmic side of the membrane; the sequence is LLDSHLQT. The chain crosses the membrane as a helical span at residues 56-77; that stretch reads PMYFFLRNFSFLEISFTNIFIP. Over 78-98 the chain is Extracellular; it reads RVLISITTGNKSISFAGCFTQ. Asparagine 87 carries an N-linked (GlcNAc...) asparagine glycan. A disulfide bond links cysteine 95 and cysteine 187. Residues 99 to 118 form a helical membrane-spanning segment; sequence YFFAMFLGATEFYLLAAMSY. Over 119 to 137 the chain is Cytoplasmic; that stretch reads DRYVAICKPLHYTTIMSSR. A helical membrane pass occupies residues 138–156; sequence ICIQLIFCSWLGGLMAIIP. The Extracellular portion of the chain corresponds to 157–193; sequence TITLMSQQDFCASNRLNHYFCDYEPLLELSCSDTSLI. A helical membrane pass occupies residues 194–217; that stretch reads EKVVFLVASVTLVVTLVLVILSYA. The Cytoplasmic segment spans residues 218–234; sequence FIIKTILKLPSAQQRTK. A helical transmembrane segment spans residues 235-257; sequence AFSTCSSHMIVISLSYGSCMFMY. The Extracellular portion of the chain corresponds to 258-270; it reads INPSAKEGDTFNK. A helical membrane pass occupies residues 271-290; it reads GVALLITSVAPLLNPFIYTL. The Cytoplasmic portion of the chain corresponds to 291–309; the sequence is RNQQVKQPFKDMVKKLLNL.

The protein belongs to the G-protein coupled receptor 1 family.

It localises to the cell membrane. Odorant receptor. The chain is Olfactory receptor 2AP1 (OR2AP1) from Homo sapiens (Human).